A 543-amino-acid polypeptide reads, in one-letter code: MKVATSALLVGAVSASVGPQQQVLKFPDSFSELKEGAWSKPLHKLEESLKTLTGEARAVWDEVAMMFPESFEKAAFFSEPKPHTRKHDSEWDHIIKGADIQNVWVENKNGDKEREIDGKLENYSMRTKKVDPSVLGVDKVKQYSGYLDDEEEDKHLFYWFFESRNDPKNDPVVLWLNGGPGCSSLTGLFMELGPASITKDGKIKHNPYSWNSNASVIFLDQPVNVGYSYSSGQVSNTVAAGKDIYALLTLFFKQFPEYAEQSFHISGESYAGHYIPVFASEILSHKKRNINLQSVLIGNGLTDGLTQYEYYRPMACGEGGWPAVLDESQCKAMDNAYPRCASLIENCYNSESVWSCVPASIYCNNAMIGPYQRTGQNVYDIRKPCGSNSLCYDELDWIQAYLNKKEVMKAVGAEISSYESCNFDINRNFLLQGDWMKPFHRIVPGLLAEIPVLIYAGDADYICNWLGNKAWTEALEWPGQKDYNKAEMEDFKIDGKGEAVGQVKSSGNFTFLKIHAGGHMVPYDQPEASLTMLNRWLAGDFWA.

The first 17 residues, 1–17 (MKVATSALLVGAVSASV), serve as a signal peptide directing secretion. Residues 18-128 (GPQQQVLKFP…KLENYSMRTK (111 aa)) constitute a propeptide that is removed on maturation. Residues asparagine 122 and asparagine 213 are each glycosylated (N-linked (GlcNAc...) asparagine). 5 disulfide bridges follow: cysteine 182–cysteine 421, cysteine 316–cysteine 330, cysteine 340–cysteine 363, cysteine 347–cysteine 356, and cysteine 385–cysteine 391. Serine 269 is a catalytic residue. Residue aspartate 460 is part of the active site. A glycan (N-linked (GlcNAc...) asparagine) is linked at asparagine 508. Residue histidine 519 is part of the active site.

This sequence belongs to the peptidase S10 family.

The protein localises to the vacuole. It catalyses the reaction Release of a C-terminal amino acid with broad specificity.. Functionally, vacuolar carboxypeptidase involved in degradation of small peptides. Digests preferentially peptides containing an aliphatic or hydrophobic residue in P1' position, as well as methionine, leucine or phenylalanine in P1 position of ester substrate. The protein is Carboxypeptidase Y homolog A (CPYA) of Leptosphaeria maculans (strain JN3 / isolate v23.1.3 / race Av1-4-5-6-7-8) (Blackleg fungus).